The sequence spans 578 residues: PTS system fructose-specific EIIB'BC component (578 aa).

PTS EIIB type-2 domains are found at residues 1–99 (MSKI…EALA) and 119–214 (VVAI…AALA). The active-site Phosphocysteine intermediate; for EIIB activity is the Cys-125. Cys-125 is subject to Phosphocysteine; by EIIA. In terms of domain architecture, PTS EIIC type-2 spans 241-576 (PYMHLLTGVS…KKPIPAEERA (336 aa)). The next 9 membrane-spanning stretches (helical) occupy residues 251–271 (YMLP…VFGI), 284–304 (LMAI…AGFI), 319–339 (IGGM…VAGF), 364–384 (VLIL…YVVG), 405–425 (NAVV…GGPI), 428–450 (AAYT…AVMA), 477–497 (AGGA…IPFA), 518–538 (LSMA…VLAI), and 545–565 (LGLY…LLIA).

It is found in the cell inner membrane. It catalyses the reaction D-fructose(out) + N(pros)-phospho-L-histidyl-[protein] = D-fructose 1-phosphate(in) + L-histidyl-[protein]. The phosphoenolpyruvate-dependent sugar phosphotransferase system (sugar PTS), a major carbohydrate active transport system, catalyzes the phosphorylation of incoming sugar substrates concomitantly with their translocation across the cell membrane. The enzyme II FruAB PTS system is involved in fructose transport. The polypeptide is PTS system fructose-specific EIIB'BC component (Rhodobacter capsulatus (Rhodopseudomonas capsulata)).